We begin with the raw amino-acid sequence, 98 residues long: NADH-ubiquinone oxidoreductase chain 4L (98 aa).

The next 3 membrane-spanning stretches (helical) occupy residues 1 to 21, 29 to 49, and 58 to 78; these read MPII…GMLI, SLLC…LMAL, and IVPI…LALL.

The protein belongs to the complex I subunit 4L family. As to quaternary structure, core subunit of respiratory chain NADH dehydrogenase (Complex I) which is composed of 45 different subunits.

It localises to the mitochondrion inner membrane. It carries out the reaction a ubiquinone + NADH + 5 H(+)(in) = a ubiquinol + NAD(+) + 4 H(+)(out). Its function is as follows. Core subunit of the mitochondrial membrane respiratory chain NADH dehydrogenase (Complex I) which catalyzes electron transfer from NADH through the respiratory chain, using ubiquinone as an electron acceptor. Part of the enzyme membrane arm which is embedded in the lipid bilayer and involved in proton translocation. The sequence is that of NADH-ubiquinone oxidoreductase chain 4L (MT-ND4L) from Nasalis larvatus (Proboscis monkey).